A 187-amino-acid polypeptide reads, in one-letter code: MGNKQTIFTDEQLDAYQDCTFFTRKEILRLHGRYHELAPHLVPMDYTNDPDVKVPLALIVNMPELKENPFRNRIVESFSEDGQGNLSFNDFVDMFSVLSEMAPRELKAIYAFKIYDFNVDNYICKEDLEKTLNKLTKEELTPEEVNLVCEKAIEEADLDGDNKLSFADFENMISRAPDFLSTFHIRI.

EF-hand domains follow at residues 66–101 (KENPFRNRIVESFSEDGQGNLSFNDFVDMFSVLSEM), 103–138 (PRELKAIYAFKIYDFNVDNYICKEDLEKTLNKLTKE), and 144–179 (EVNLVCEKAIEEADLDGDNKLSFADFENMISRAPDF). Residues Asp-157, Asp-159, Asp-161, Lys-163, and Asp-168 each coordinate Ca(2+).

As to quaternary structure, monomer. Homodimer. Enriched in central and striolar hair cells.

The protein localises to the cytoplasm. Its subcellular location is the cell projection. It is found in the stereocilium. It localises to the photoreceptor inner segment. The protein resides in the cilium. The protein localises to the photoreceptor outer segment. Its subcellular location is the cell membrane. It is found in the sarcolemma. In terms of biological role, calcium- and integrin-binding protein. Plays a role in intracellular calcium homeostasis. Critical for proper photoreceptor cell maintenance and function. Essential for development, maintenance and function of mechanosensory hair cells. The chain is Calcium and integrin-binding family member 2 from Danio rerio (Zebrafish).